Reading from the N-terminus, the 506-residue chain is ATP synthase subunit alpha, chloroplastic (506 aa).

Residue Gly170–Thr177 participates in ATP binding.

The protein belongs to the ATPase alpha/beta chains family. In terms of assembly, F-type ATPases have 2 components, CF(1) - the catalytic core - and CF(0) - the membrane proton channel. CF(1) has five subunits: alpha(3), beta(3), gamma(1), delta(1), epsilon(1). CF(0) has four main subunits: a, b, b' and c.

It localises to the plastid. The protein resides in the chloroplast thylakoid membrane. The catalysed reaction is ATP + H2O + 4 H(+)(in) = ADP + phosphate + 5 H(+)(out). Functionally, produces ATP from ADP in the presence of a proton gradient across the membrane. The alpha chain is a regulatory subunit. The chain is ATP synthase subunit alpha, chloroplastic from Euglena gracilis.